The sequence spans 74 residues: Exodeoxyribonuclease 7 small subunit (74 aa).

The protein belongs to the XseB family. In terms of assembly, heterooligomer composed of large and small subunits.

It localises to the cytoplasm. It catalyses the reaction Exonucleolytic cleavage in either 5'- to 3'- or 3'- to 5'-direction to yield nucleoside 5'-phosphates.. Bidirectionally degrades single-stranded DNA into large acid-insoluble oligonucleotides, which are then degraded further into small acid-soluble oligonucleotides. This chain is Exodeoxyribonuclease 7 small subunit, found in Neisseria meningitidis serogroup C / serotype 2a (strain ATCC 700532 / DSM 15464 / FAM18).